The following is a 184-amino-acid chain: Large ribosomal subunit protein uL6 (184 aa).

This sequence belongs to the universal ribosomal protein uL6 family. Part of the 50S ribosomal subunit.

This protein binds to the 23S rRNA, and is important in its secondary structure. It is located near the subunit interface in the base of the L7/L12 stalk, and near the tRNA binding site of the peptidyltransferase center. In Thermosipho africanus (strain TCF52B), this protein is Large ribosomal subunit protein uL6.